We begin with the raw amino-acid sequence, 701 residues long: CRS2-associated factor 1, chloroplastic (701 aa).

Residues 1-37 constitute a chloroplast transit peptide; that stretch reads MSLKLNTPFPIFAPSLFPNHNPRAPSEIRFSRWGNAN. Disordered regions lie at residues 68-136 and 191-221; these read VHTH…PEVK and LPQS…QKPG. 2 CRM domains span residues 241–337 and 359–455; these read EPLT…TRPR and EGLT…LTTP. The tract at residues 471–532 is disordered; sequence LPEDDEPSVS…SLQSWSTKDV (62 aa). 2 stretches are compositionally biased toward polar residues: residues 479–492 and 520–530; these read VSPN…QNPP and TINSLQSWSTK. The CRS2 binding stretch occupies residues 564–586; it reads RVLILMKQAVESGTALVLDAADL.

As to quaternary structure, interacts with CRS2 and RNA. Part of large ribonucleo-protein complexes that include group IIB introns, CRS2 and CAF1.

It localises to the plastid. The protein resides in the chloroplast stroma. Required for the splicing of group IIB introns in chloroplasts. Forms splicing particles with CRS2. Interacts with RNA and confers intron specificity of the splicing particles. This is CRS2-associated factor 1, chloroplastic from Arabidopsis thaliana (Mouse-ear cress).